We begin with the raw amino-acid sequence, 127 residues long: Fluoride-specific ion channel FluC (127 aa).

The next 4 membrane-spanning stretches (helical) occupy residues 7–27 (VYVA…VAWV), 38–58 (GTLA…VYVV), 70–90 (LIMV…LEAW), and 102–122 (LAYI…GIAL). The Na(+) site is built by G77 and T80.

This sequence belongs to the fluoride channel Fluc/FEX (TC 1.A.43) family.

It is found in the cell inner membrane. It carries out the reaction fluoride(in) = fluoride(out). Its activity is regulated as follows. Na(+) is not transported, but it plays an essential structural role and its presence is essential for fluoride channel function. Functionally, fluoride-specific ion channel. Important for reducing fluoride concentration in the cell, thus reducing its toxicity. This chain is Fluoride-specific ion channel FluC, found in Hahella chejuensis (strain KCTC 2396).